The following is a 266-amino-acid chain: DNA-directed RNA polymerase subunit Rpo3 (266 aa).

[3Fe-4S] cluster-binding residues include cysteine 205, cysteine 208, and cysteine 211.

This sequence belongs to the archaeal Rpo3/eukaryotic RPB3 RNA polymerase subunit family. As to quaternary structure, part of the RNA polymerase complex. It depends on [3Fe-4S] cluster as a cofactor.

It localises to the cytoplasm. The enzyme catalyses RNA(n) + a ribonucleoside 5'-triphosphate = RNA(n+1) + diphosphate. DNA-dependent RNA polymerase (RNAP) catalyzes the transcription of DNA into RNA using the four ribonucleoside triphosphates as substrates. The sequence is that of DNA-directed RNA polymerase subunit Rpo3 from Methanosarcina acetivorans (strain ATCC 35395 / DSM 2834 / JCM 12185 / C2A).